Consider the following 220-residue polypeptide: Glutathione S-transferase U23 (220 aa).

Residues 3-82 (EEIILLDYWA…YIDELWPDTN (80 aa)) enclose the GST N-terminal domain. Glutathione contacts are provided by residues 13 to 14 (SM), 39 to 40 (NK), 53 to 54 (KI), and 66 to 67 (ES). The GST C-terminal domain occupies 88–208 (DPYQRAQARF…LPDSDKVLKS (121 aa)).

This sequence belongs to the GST superfamily. Tau family.

It is found in the cytoplasm. The protein localises to the cytosol. The catalysed reaction is RX + glutathione = an S-substituted glutathione + a halide anion + H(+). In terms of biological role, may be involved in the conjugation of reduced glutathione to a wide number of exogenous and endogenous hydrophobic electrophiles and have a detoxification role against certain herbicides. This chain is Glutathione S-transferase U23 (GSTU23), found in Arabidopsis thaliana (Mouse-ear cress).